Here is a 23-residue protein sequence, read N- to C-terminus: NEESDLIADKFTNYNKLIRPAKH.

The protein belongs to the ligand-gated ion channel (TC 1.A.9) family. Acetylcholine receptor (TC 1.A.9.1) subfamily. Gamma/CHRNG sub-subfamily. In terms of assembly, pentamer of two alpha chains, and one each of the beta, delta, and gamma chains.

The protein resides in the postsynaptic cell membrane. It is found in the cell membrane. It catalyses the reaction K(+)(in) = K(+)(out). The catalysed reaction is Na(+)(in) = Na(+)(out). Its function is as follows. After binding acetylcholine, the AChR responds by an extensive change in conformation that affects all subunits and leads to opening of an ion-conducting channel across the plasma membrane. This Electrophorus electricus (Electric eel) protein is Acetylcholine receptor subunit gamma (chrng).